Reading from the N-terminus, the 243-residue chain is MAGAHSNPSWSRHLFKAVLMVLGALLLVHSASAQTHREFASPGQQKRESSADILTEIGRSLKETLDTWLGPETMHVISETLLQVMWAISSAISVACFALSGIAAQLLSALGLDGEQLTQVLKLSPSQVQTLLLWGAAALVIYWLLSLLLGLVLALLGRILGGLKLVLFVAGFVGLVRSVPDPSTRALLLLALLTVFALLSRLTGSRSSGTHLEAKVRGLERQIEELRGRQRRAAKIPRSMEEE.

The first 33 residues, 1-33, serve as a signal peptide directing secretion; that stretch reads MAGAHSNPSWSRHLFKAVLMVLGALLLVHSASA. At 34-83 the chain is on the lumenal side; sequence QTHREFASPGQQKRESSADILTEIGRSLKETLDTWLGPETMHVISETLLQ. The helical transmembrane segment at 84-104 threads the bilayer; sequence VMWAISSAISVACFALSGIAA. Residues 105–135 are Cytoplasmic-facing; that stretch reads QLLSALGLDGEQLTQVLKLSPSQVQTLLLWG. The chain crosses the membrane as a helical span at residues 136–156; it reads AAALVIYWLLSLLLGLVLALL. The Lumenal segment spans residues 157-185; sequence GRILGGLKLVLFVAGFVGLVRSVPDPSTR. The helical transmembrane segment at 186–205 threads the bilayer; it reads ALLLLALLTVFALLSRLTGS. Residues 206 to 243 lie on the Cytoplasmic side of the membrane; the sequence is RSSGTHLEAKVRGLERQIEELRGRQRRAAKIPRSMEEE.

In terms of assembly, homooligomer. Interacts with CRYAB; in the cellular response to DNA damage.

It localises to the nucleus outer membrane. Its subcellular location is the endoplasmic reticulum membrane. The protein resides in the sarcoplasmic reticulum membrane. It carries out the reaction K(+)(in) = K(+)(out). It catalyses the reaction Ca(2+)(in) = Ca(2+)(out). Functionally, functions as a voltage-gated monoatomic cation channel permeable to both potassium and calcium. Plays a role in the cellular response to DNA damage. The polypeptide is Voltage-gated monoatomic cation channel TMEM109 (Rattus norvegicus (Rat)).